Here is a 472-residue protein sequence, read N- to C-terminus: Alanine--anticapsin ligase (472 aa).

Position 109 (E109) interacts with Mg(2+). Positions 138 and 178 each coordinate ATP. The 214-residue stretch at 142–355 (RAAFNRAGVK…MAQLLLDVLC (214 aa)) folds into the ATP-grasp domain. L182 provides a ligand contact to Mg(2+). ATP is bound by residues 184 to 185 (SS), 226 to 229 (EEFL), and Q268. Substrate-binding positions include E273 and 309 to 311 (HTE). Positions 311 and 324 each coordinate Mg(2+). 328–331 (RFAG) lines the substrate pocket.

In terms of assembly, monomer or homodimer. Mg(2+) serves as cofactor.

The enzyme catalyses L-anticapsin + L-alanine + ATP = bacilysin + ADP + phosphate + H(+). The protein operates within antibiotic biosynthesis; bacilysin biosynthesis. Part of the bacABCDEFG operon responsible for the biosynthesis of bacilysin, an irreversible inactivator of the glutaminase domain of glucosamine synthetase. Catalyzes the formation of alpha-dipeptides from various L-amino acids in the presence of ATP. In vivo catalyzes the ligation of L-alanine and L-anticapsin (epoxycyclohexanonyl-Ala) to produce the final bacilysin antibiotic (L-Ala-L-4S-cyclohexenonyl-Ala dipeptide). This is Alanine--anticapsin ligase from Bacillus subtilis.